The sequence spans 125 residues: Small ribosomal subunit protein eS8 (125 aa).

Residues 1–34 (MQWQGRSVRKSTGGRYSPSRGKRRREIGSAPAET) form a disordered region.

The protein belongs to the eukaryotic ribosomal protein eS8 family. As to quaternary structure, part of the 30S ribosomal subunit.

The sequence is that of Small ribosomal subunit protein eS8 from Methanospirillum hungatei JF-1 (strain ATCC 27890 / DSM 864 / NBRC 100397 / JF-1).